The sequence spans 584 residues: Arginine--tRNA ligase (584 aa).

The 'HIGH' region motif lies at 126–136; sequence PNIAKEMHVGH.

It belongs to the class-I aminoacyl-tRNA synthetase family. Monomer.

It is found in the cytoplasm. The catalysed reaction is tRNA(Arg) + L-arginine + ATP = L-arginyl-tRNA(Arg) + AMP + diphosphate. This chain is Arginine--tRNA ligase (argS), found in Synechocystis sp. (strain ATCC 27184 / PCC 6803 / Kazusa).